Reading from the N-terminus, the 610-residue chain is Preterminal protein (610 aa).

The interval 288-379 (TLRSGTQTGL…ESFSDDVGLS (92 aa)) is disordered. Positions 328–337 (SLPIRRRRRR) match the Nuclear localization signal motif. A compositionally biased stretch (basic residues) spans 331–340 (IRRRRRRGTR). A compositionally biased stretch (basic and acidic residues) spans 341-350 (RQVEREDSVR). Ser549 bears the O-(5'-phospho-DNA)-serine mark.

The protein belongs to the adenoviridae terminal protein family. Heterodimer with the polymerase; this heterodimer binds to bp 9 to 18 of the genome. Interacts with host POU2F1; POU2F1 binds to the auxiliary sequences in the inverted terminal repeats and tethers the pTP-POL heterodimer to the origin DNA thereby participating in the assembly of the pre-initiation complex (POL-TP-DBP-NFIA-POU2F1). Preterminal protein is used to replicate viral genome, upon genomic encapsidation it is processed first into iTP and finally into TP by adenovirus protease.

It is found in the host nucleus matrix. Protein covalently bound to the viral DNA that acts as a primer for viral genomic replication by DNA strand displacement. Assembles on the viral origin of replication in an initiation complex with viral polymerase, DBP, host NFIA and host POU2F1/OCT1. During initiation, the polymerase covalently couples the first dCTP with Ser-580 of pTP. The terminal protein stimulates the template activity over 20 fold compared to protein-free templates. Neo-synthesized viral genomes are linked to two preterminal proteins, one for each 5' end. These new genomes are encapsidated in the nucleus, and during capsid maturation by viral protease, preterminal protein is first cleaved into intermediary (iTP), then into mature TP. May play a role in host nuclear matrix localization of genomic DNA. The polypeptide is Preterminal protein (Snake adenovirus serotype 1 (SnAdV-1)).